The following is a 777-amino-acid chain: MTKPQGTGGKKKNQLTLAQLAAYDDILTDALVDHAYYWTTIPKNRTSYHPSRGIKEEEITKIIQNHLIVDPDIATAEEKLLATDGLKRFCNTLKTPREQNDFKAHLRRYMSIYLPDCPFEVNATNRYTIVTYEASITARRFIQRNETIKYLAGIQVVITPEEELEMSLRKKDFSLIVSSRSKSTSLFMGPARFANHDCNANARLITRGQAGIEIIACRNIEVGEEITVTYSESYFGENNCDCLCATCESNLRNGWRPVDGEAAVQKSIEDEQPTESSTPYSFRRKRRYGSTALQASRTPSVTPDMRPRVLRKSQSQMMLGERTSTTDSAAQGAGADGQSRKRALEMGTPPFTPTKKQKTTQYPVVPIALSTAPSRGSSDNETSKSPLSFSTTNDNVTDATSQGSESPGPIILSPEPTPIKQAIGLLKQEEGVNEVAVQQVPEAFTPPPSQPTEEEPPMVRPAFERLAARDRMSIANLISGPSSPAPPVVFSVAEVTTHRPKPQTLQLQKTDQTATISTLQTVTAAVQKEAPVVKTESPIKPTVGQVEKITQVQTTTKSCTPSKPKAQAAALPQHHMPVSTAPRGRVPHDYTLTPLLLSEPETAWIMCTHCASAFVQKNAYLTKSTCPRCERHSKLYGYMWPKTEKYGPNDKEERILDHRMINRFLTAEEEARARGRVYWRERMGSKGKQGSSAPSTKGTPAGEKNEQSAKQEQSQGQYVQERFAVRKKVKVQVRSTVPTPVIMTKKDEVAEAAALGLRRSGRARRVSAKLADCELDF.

The SET domain maps to Cys117–Ser231. Disordered stretches follow at residues Ala263–Pro414 and Arg682–Tyr718. Residues Thr291–Val301 are compositionally biased toward polar residues. Positions Thr323–Gly337 are enriched in low complexity. 2 stretches are compositionally biased toward polar residues: residues Thr371 to Glu405 and Lys688 to Gly698.

It belongs to the class V-like SAM-binding methyltransferase superfamily. Histone-lysine methyltransferase family. Suvar4-20 subfamily.

Its subcellular location is the nucleus. The protein resides in the chromosome. It catalyses the reaction L-lysyl(20)-[histone H4] + 3 S-adenosyl-L-methionine = N(6),N(6),N(6)-trimethyl-L-lysyl(20)-[histone H4] + 3 S-adenosyl-L-homocysteine + 3 H(+). Functionally, histone methyltransferase that trimethylates 'Lys-20' of histone H4 to form H4K20me3. The sequence is that of Histone-lysine N-methyltransferase set9 (hlm-1) from Neurospora crassa (strain ATCC 24698 / 74-OR23-1A / CBS 708.71 / DSM 1257 / FGSC 987).